A 137-amino-acid polypeptide reads, in one-letter code: Large-conductance mechanosensitive channel (137 aa).

The next 2 membrane-spanning stretches (helical) occupy residues 10 to 30 and 76 to 96; these read FAMR…AAFG and GVFI…FMAI.

Belongs to the MscL family. In terms of assembly, homopentamer.

It is found in the cell inner membrane. Its function is as follows. Channel that opens in response to stretch forces in the membrane lipid bilayer. May participate in the regulation of osmotic pressure changes within the cell. This Escherichia coli O45:K1 (strain S88 / ExPEC) protein is Large-conductance mechanosensitive channel.